The following is a 636-amino-acid chain: MTAATPARRPIRPLPDQLISQIAAGEVVERPASVVKELLENALDAGATQLQIKLEEGGVRRIAITDNGGGIPVDELPVALMRHATSKIGSLEELESVATLGFRGEALASIASVAELTLTSRTAQDAHATQIIAQTGRVQPASGGVGTTVDVQHLYFNTPARRKFLKTEQTELGHCLEVIRRTALARPDVAISVHHNGKPLEHWNAAQADMRTAAVLGTEFARARLPFEEAAGELRLFGFAGLPTASRGRADHQFFYVNGRFVRDRLLTHAVRSAYEDVLHGDRFPAYVLCLELPPEAVDVNVHPSKIEVRFRDSRAVHQFVYHAVQRALSRHAGEQGDSLRTDIADAPEQPGATATPADNTTRWVNQMAARQTSLGIAQPRAEYLAMMRGGSAPQPSSRPAWMADVPSAATLFDGAASAPADAAPAQASEPAAAPQADDSDDAHPLGFAVAQLHGIYVLAQNARGMVLVDMHAAHERILYEQLKTALEARRIEVQPLLIPVTFAASPVEIGTAEEFGDTLDLLGFDISAVSPTTLAVRAVPTLLQKADAQALARDVLRDLQAYGGSRVLAERQNELLATLACHSAVRANRRLNLDEMNALLRQMEATERADQCNHGRPTWIQLTVADLDRLFLRGQ.

Positions 332-344 (HAGEQGDSLRTDI) are enriched in basic and acidic residues. Disordered regions lie at residues 332–360 (HAGE…PADN) and 417–443 (ASAP…SDDA). Positions 417 to 437 (ASAPADAAPAQASEPAAAPQA) are enriched in low complexity.

This sequence belongs to the DNA mismatch repair MutL/HexB family.

This protein is involved in the repair of mismatches in DNA. It is required for dam-dependent methyl-directed DNA mismatch repair. May act as a 'molecular matchmaker', a protein that promotes the formation of a stable complex between two or more DNA-binding proteins in an ATP-dependent manner without itself being part of a final effector complex. The chain is DNA mismatch repair protein MutL from Ralstonia nicotianae (strain ATCC BAA-1114 / GMI1000) (Ralstonia solanacearum).